The chain runs to 4561 residues: StAR-related lipid transfer protein 9 (4561 aa).

Positions 3–384 (NVQVAVRVRP…MRYASNAKNI (382 aa)) constitute a Kinesin motor domain. ATP is bound at residue 103-110 (GQTGSGKT). A compositionally biased stretch (low complexity) spans 307–321 (SSGGDSGVPSTTSGA). The segment at 307–330 (SSGGDSGVPSTTSGASSGGGPARR) is disordered. One can recognise an FHA domain in the interval 482–533 (TKIGRIDSDQEQDIVLQGQWIERDHCTITSTCGVVILRPTQGARCTVNGREV). Disordered regions lie at residues 784-805 (SRAP…RRSR), 873-1064 (SRWR…DTES), and 1092-1153 (WNLP…PSDS). Composition is skewed to polar residues over residues 789–805 (WASS…RRSR), 884–903 (ASTQ…SQEI), 911–920 (CQMSSQGQST), and 939–948 (RWASVNTKTG). 2 stretches are compositionally biased toward basic and acidic residues: residues 1046–1060 (RPIK…RDLS) and 1124–1135 (SRGEYSMKDHGH). The residue at position 1164 (serine 1164) is a Phosphoserine. 16 disordered regions span residues 1288 to 1392 (PSGD…SDMS), 1700 to 1767 (REAW…EEEN), 1959 to 1980 (ECKA…EEKQ), 2077 to 2120 (TNAT…ADRL), 2320 to 2356 (LATG…LGGS), 2384 to 2427 (VSTS…SSLD), 2439 to 2467 (FLLQ…LPNS), 2622 to 2656 (KPRQ…DPLP), 2712 to 2735 (KDSI…SEKI), 2777 to 2800 (TGLE…GNVG), 3002 to 3067 (RSVE…PGTL), 3185 to 3207 (AQTE…REQL), 3246 to 3286 (ELNL…TSLK), 3645 to 3703 (EGAA…LRPE), 3790 to 3847 (SDLA…PQQS), and 3863 to 3913 (QPKT…GRTT). The span at 1300–1321 (DIHEIQPHDEKPKHWLSIEEPK) shows a compositional bias: basic and acidic residues. Composition is skewed to polar residues over residues 1328 to 1360 (LPQS…SQGL) and 1722 to 1741 (PKLS…TTTK). Basic and acidic residues-rich tracts occupy residues 1754 to 1767 (ELGK…EEEN) and 1970 to 1980 (QSKEEPLEEKQ). The segment covering 2077-2091 (TNATSNNNTQIQKLT) has biased composition (polar residues). The span at 2096-2110 (RSREYVQTRESESEH) shows a compositional bias: basic and acidic residues. 2 stretches are compositionally biased toward polar residues: residues 2333–2351 (TRSS…TTHT) and 2399–2408 (TSTGSTTQEA). Positions 2414-2463 (EATVQKERKNSSLDRISRQAEKRVSFLLQEDSNQGEEERQKAEETSEDQQ) form a coiled coil. The span at 2417-2427 (VQKERKNSSLD) shows a compositional bias: basic and acidic residues. The segment covering 2634–2647 (DSSEVIEKRKEASR) has biased composition (basic and acidic residues). Composition is skewed to polar residues over residues 3039 to 3054 (LKNN…SQTM) and 3187 to 3199 (TEPS…THSQ). Residues 3689-3700 (PASPDGSPPPSL) are compositionally biased toward pro residues. The span at 3812-3835 (DSQRAESLDREGKSPLGKSSERLL) shows a compositional bias: basic and acidic residues. A compositionally biased stretch (polar residues) spans 3863-3874 (QPKTTTGDQSKL). The stretch at 4185-4224 (SDIELMLQEYRRAREEAKVEIAQARDRLKERTEQEKMRIR) forms a coiled coil. The 218-residue stretch at 4344 to 4561 (PYQDLAKHIV…VAKLASFLRS (218 aa)) folds into the START domain.

This sequence belongs to the TRAFAC class myosin-kinesin ATPase superfamily. Kinesin family. In terms of assembly, interacts with ATAD3A.

The protein resides in the cytoplasm. Its subcellular location is the cytoskeleton. The protein localises to the microtubule organizing center. It is found in the centrosome. It localises to the centriole. The protein resides in the nucleus. In terms of biological role, microtubule-dependent motor protein required for spindle pole assembly during mitosis. Required to stabilize the pericentriolar material (PCM). The chain is StAR-related lipid transfer protein 9 (Stard9) from Mus musculus (Mouse).